Reading from the N-terminus, the 518-residue chain is UNC5C-like protein (518 aa).

The Extracellular portion of the chain corresponds to 1–10 (MSPQESSVQP). A helical; Signal-anchor for type III membrane protein membrane pass occupies residues 11-31 (SQFLLLVGIPVASALLLAQCL). The Cytoplasmic portion of the chain corresponds to 32-518 (RWHCCQWLPG…NHGLELDEKL (487 aa)). One can recognise a ZU5 domain in the interval 102–237 (VFSAREVDHR…FSLYTCVLEA (136 aa)). An interaction with RELA and NFKB1 region spans residues 186-400 (QQPSQACAYS…ETWAVPPPVS (215 aa)). The tract at residues 208–235 (PLGQPGTHISRDECRILLSHFSLYTCVL) is peptidase S68. Residues His227 and Ser229 contribute to the active site. One can recognise a Death domain in the interval 415–494 (QLQMLLEPNS…SAIQNYLNRS (80 aa)).

This sequence belongs to the unc-5 family. In terms of assembly, interacts with p65/RELA and NFKB1.

It localises to the membrane. The protein resides in the cytoplasm. Its function is as follows. Inhibits NF-kappa-B-dependent transcription by impairing NF-kappa-B binding to its targets. The chain is UNC5C-like protein (Unc5cl) from Mus musculus (Mouse).